Here is a 129-residue protein sequence, read N- to C-terminus: Small ribosomal subunit protein uS11 (129 aa).

Belongs to the universal ribosomal protein uS11 family. In terms of assembly, part of the 30S ribosomal subunit. Interacts with proteins S7 and S18. Binds to IF-3.

Located on the platform of the 30S subunit, it bridges several disparate RNA helices of the 16S rRNA. Forms part of the Shine-Dalgarno cleft in the 70S ribosome. This chain is Small ribosomal subunit protein uS11, found in Francisella tularensis subsp. holarctica (strain FTNF002-00 / FTA).